The sequence spans 352 residues: Protein RecA (352 aa).

Residue 68-75 (GPESSGKT) coordinates ATP.

This sequence belongs to the RecA family.

It is found in the cytoplasm. Functionally, can catalyze the hydrolysis of ATP in the presence of single-stranded DNA, the ATP-dependent uptake of single-stranded DNA by duplex DNA, and the ATP-dependent hybridization of homologous single-stranded DNAs. It interacts with LexA causing its activation and leading to its autocatalytic cleavage. The polypeptide is Protein RecA (Clostridium perfringens (strain ATCC 13124 / DSM 756 / JCM 1290 / NCIMB 6125 / NCTC 8237 / Type A)).